The chain runs to 206 residues: Small ribosomal subunit protein uS4 (206 aa).

Residues 96-156 (TRLDNVVYRM…EKSKKQARII (61 aa)) enclose the S4 RNA-binding domain.

This sequence belongs to the universal ribosomal protein uS4 family. Part of the 30S ribosomal subunit. Contacts protein S5. The interaction surface between S4 and S5 is involved in control of translational fidelity.

In terms of biological role, one of the primary rRNA binding proteins, it binds directly to 16S rRNA where it nucleates assembly of the body of the 30S subunit. With S5 and S12 plays an important role in translational accuracy. The chain is Small ribosomal subunit protein uS4 from Shewanella woodyi (strain ATCC 51908 / MS32).